The sequence spans 309 residues: Putative G-protein coupled receptor B0244.4 (309 aa).

The next 6 membrane-spanning stretches (helical) occupy residues 39–59 (SIIFWIDFLIPCTLFVVACFL), 82–102 (YIFMVSRAISALTACVIMLAL), 114–134 (IYFLFFLIDDLSFYSLLGSYV), 162–182 (FAIANLITSVVLAITTAMFQA), 204–224 (IMLVLILTSFLIPIVTLSFVL), and 256–276 (WTLFTFTLITLTEAIPSFYLV).

It belongs to the G-protein coupled receptor 1 family. B0244 subfamily.

The protein resides in the cell membrane. The polypeptide is Putative G-protein coupled receptor B0244.4 (Caenorhabditis elegans).